We begin with the raw amino-acid sequence, 770 residues long: Tripartite terminase subunit 1 (770 aa).

Residues 199–227 form a C3H1-type zinc finger; sequence CAICFEELCITANQGETLHRRLLGCICDH. 675-682 is an ATP binding site; sequence FTSVFHCG.

This sequence belongs to the herpesviridae TRM1 protein family. In terms of assembly, associates with TRM2 and TRM3 to form the tripartite terminase complex. Interacts with portal protein.

The protein localises to the host nucleus. Its function is as follows. Component of the molecular motor that translocates viral genomic DNA in empty capsid during DNA packaging. Forms a tripartite terminase complex together with TRM2 and TRM3 in the host cytoplasm. Once the complex reaches the host nucleus, it interacts with the capsid portal vertex. This portal forms a ring in which genomic DNA is translocated into the capsid. TRM1 carries an endonuclease activity that plays an important role for the cleavage of concatemeric viral DNA into unit length genomes. This chain is Tripartite terminase subunit 1, found in Varicella-zoster virus (strain Dumas) (HHV-3).